The primary structure comprises 1051 residues: Ubiquitin-activating enzyme E1 1 (1051 aa).

A run of 2 repeats spans residues 56-194 and 453-605. The 2 approximate repeats stretch occupies residues 56 to 605; sequence GRETMKRLFG…GAKCNTQMVI (550 aa). ATP is bound by residues alanine 472, aspartate 498, arginine 509, lysine 522, and 570–571; that span reads DN. Cysteine 626 (glycyl thioester intermediate) is an active-site residue.

It belongs to the ubiquitin-activating E1 family. Monomer. In terms of processing, the N-terminus is blocked.

The enzyme catalyses ATP + ubiquitin + [E1 ubiquitin-activating enzyme]-L-cysteine = AMP + diphosphate + S-ubiquitinyl-[E1 ubiquitin-activating enzyme]-L-cysteine.. Its pathway is protein modification; protein ubiquitination. Its function is as follows. Activates ubiquitin by first adenylating its C-terminal glycine residue with ATP, and thereafter linking this residue to the side chain of a cysteine residue in E1, yielding a ubiquitin-E1 thioester and free AMP. This Triticum aestivum (Wheat) protein is Ubiquitin-activating enzyme E1 1.